Here is a 549-residue protein sequence, read N- to C-terminus: Chaperonin GroEL (549 aa).

Residues 30-33 (TLGP), K51, 87-91 (DGTTT), G415, and D495 contribute to the ATP site.

It belongs to the chaperonin (HSP60) family. Forms a cylinder of 14 subunits composed of two heptameric rings stacked back-to-back. Interacts with the co-chaperonin GroES.

It localises to the cytoplasm. The enzyme catalyses ATP + H2O + a folded polypeptide = ADP + phosphate + an unfolded polypeptide.. Together with its co-chaperonin GroES, plays an essential role in assisting protein folding. The GroEL-GroES system forms a nano-cage that allows encapsulation of the non-native substrate proteins and provides a physical environment optimized to promote and accelerate protein folding. In Hahella chejuensis (strain KCTC 2396), this protein is Chaperonin GroEL.